We begin with the raw amino-acid sequence, 974 residues long: Autophagy-related protein 13 (974 aa).

A compositionally biased stretch (polar residues) spans 1–10 (MHQHPRSSVP). Disordered stretches follow at residues 1-61 (MHQH…EQGR), 379-575 (HQVG…AESI), 661-689 (ISTA…SRLS), 703-743 (SRLP…RIFN), and 787-974 (GATQ…HVWS). The segment covering 11 to 20 (SPAPNFPPRP) has biased composition (pro residues). The segment covering 21 to 30 (TARDDRREQE) has biased composition (basic and acidic residues). Composition is skewed to polar residues over residues 32 to 45 (APSS…SNSA), 379 to 391 (HQVG…SPIS), and 434 to 445 (SSNFQRRPSVSF). Low complexity predominate over residues 451–464 (PPLSASPALADSPL). Positions 469 to 482 (RNMSSRIPTGTSAD) are enriched in polar residues. The span at 491–521 (SAASARRPTTIASEQAISSSNSASPKPAPIS) shows a compositional bias: low complexity. Positions 547–559 (SGRASATSSNAQP) are enriched in polar residues. Positions 703–719 (SRLPRIHHDPPLEEHSS) are enriched in basic and acidic residues. The span at 720 to 730 (AENTRAPSSTA) shows a compositional bias: polar residues. Positions 790–800 (QQQNESQKDQQ) are enriched in low complexity. Over residues 823-840 (LRGQMSGPTSASASSNPH) the composition is skewed to polar residues. A compositionally biased stretch (low complexity) spans 848 to 873 (SSRGRGYSGGHSLSSASSSLARGANL). A compositionally biased stretch (basic and acidic residues) spans 877–886 (LAERDQDRDG). Positions 887–896 (NASGSNSGNS) are enriched in low complexity. The span at 906 to 916 (QRPSTGRTLSG) shows a compositional bias: polar residues.

This sequence belongs to the ATG13 family. Fungi subfamily. In terms of assembly, interacts with atg1 to form the atg1-atg13 kinase complex.

It localises to the cytoplasm. It is found in the preautophagosomal structure. Its function is as follows. Activates the atg1 kinase in a nutritional condition dependent manner through the TOR pathway, leading to autophagy. Also involved in cytoplasm to vacuole transport (Cvt) and more specifically in Cvt vesicle formation. Seems to play a role in the switching machinery regulating the conversion between the Cvt pathway and autophagy. Finally, atg13 is also required for glycogen storage during stationary phase. In Penicillium rubens (strain ATCC 28089 / DSM 1075 / NRRL 1951 / Wisconsin 54-1255) (Penicillium chrysogenum), this protein is Autophagy-related protein 13 (atg13).